The chain runs to 174 residues: ATP-dependent protease subunit HslV (174 aa).

The active site involves Thr-4. Residues Ala-159, Cys-162, and Thr-165 each coordinate Na(+).

It belongs to the peptidase T1B family. HslV subfamily. In terms of assembly, a double ring-shaped homohexamer of HslV is capped on each side by a ring-shaped HslU homohexamer. The assembly of the HslU/HslV complex is dependent on binding of ATP.

The protein localises to the cytoplasm. It catalyses the reaction ATP-dependent cleavage of peptide bonds with broad specificity.. With respect to regulation, allosterically activated by HslU binding. Functionally, protease subunit of a proteasome-like degradation complex believed to be a general protein degrading machinery. This chain is ATP-dependent protease subunit HslV, found in Moorella thermoacetica (strain ATCC 39073 / JCM 9320).